The following is a 576-amino-acid chain: Sulfite reductase [NADPH] hemoprotein beta-component (576 aa).

The span at 1 to 12 shows a compositional bias: basic and acidic residues; that stretch reads MDAKTQPDRSRD. The disordered stretch occupies residues 1–26; that stretch reads MDAKTQPDRSRDVSQPLDKLGPDETL. Residues C441, C447, C486, and C490 each contribute to the [4Fe-4S] cluster site. Residue C490 coordinates siroheme.

Belongs to the nitrite and sulfite reductase 4Fe-4S domain family. As to quaternary structure, alpha(8)-beta(8). The alpha component is a flavoprotein, the beta component is a hemoprotein. Requires siroheme as cofactor. It depends on [4Fe-4S] cluster as a cofactor.

It carries out the reaction hydrogen sulfide + 3 NADP(+) + 3 H2O = sulfite + 3 NADPH + 4 H(+). It participates in sulfur metabolism; hydrogen sulfide biosynthesis; hydrogen sulfide from sulfite (NADPH route): step 1/1. In terms of biological role, component of the sulfite reductase complex that catalyzes the 6-electron reduction of sulfite to sulfide. This is one of several activities required for the biosynthesis of L-cysteine from sulfate. This chain is Sulfite reductase [NADPH] hemoprotein beta-component, found in Nitrobacter winogradskyi (strain ATCC 25391 / DSM 10237 / CIP 104748 / NCIMB 11846 / Nb-255).